The primary structure comprises 542 residues: LysM domain-containing protein ARB_00327 (542 aa).

An N-terminal signal peptide occupies residues M1–A35. N-linked (GlcNAc...) asparagine glycans are attached at residues N218, N298, N381, and N415. The LysM 1 domain maps to R264–V310. A disordered region spans residues D439–A484. The span at P443–S472 shows a compositional bias: low complexity. The LysM 2 domain maps to K487–V534.

It localises to the secreted. Its function is as follows. Might have a role in sequestration of chitin oligosaccharides (breakdown products of fungal cell walls that are released during invasion and act as triggers of host immunity) to dampen host defense. This chain is LysM domain-containing protein ARB_00327, found in Arthroderma benhamiae (strain ATCC MYA-4681 / CBS 112371) (Trichophyton mentagrophytes).